Reading from the N-terminus, the 299-residue chain is Dihydroorotate dehydrogenase B (NAD(+)), catalytic subunit (299 aa).

FMN-binding positions include Ser21 and 44–45 (KS). Residues Lys44, 68 to 72 (NAVGL), and Asn125 contribute to the substrate site. An FMN-binding site is contributed by Asn125. The active-site Nucleophile is Cys128. Lys163 contacts FMN. 189-190 (NT) lines the substrate pocket. Residues Gly214, 240–241 (GG), and 262–263 (GS) each bind FMN.

Belongs to the dihydroorotate dehydrogenase family. Type 1 subfamily. As to quaternary structure, heterotetramer of 2 PyrK and 2 PyrD type B subunits. It depends on FMN as a cofactor.

Its subcellular location is the cytoplasm. The enzyme catalyses (S)-dihydroorotate + NAD(+) = orotate + NADH + H(+). The protein operates within pyrimidine metabolism; UMP biosynthesis via de novo pathway; orotate from (S)-dihydroorotate (NAD(+) route): step 1/1. Catalyzes the conversion of dihydroorotate to orotate with NAD(+) as electron acceptor. The protein is Dihydroorotate dehydrogenase B (NAD(+)), catalytic subunit (pyrD) of Archaeoglobus fulgidus (strain ATCC 49558 / DSM 4304 / JCM 9628 / NBRC 100126 / VC-16).